Consider the following 442-residue polypeptide: UDP-glucosyltransferase 29 (442 aa).

Histidine 20 acts as the Proton acceptor in catalysis. Histidine 20 provides a ligand contact to an anthocyanidin. The active-site Charge relay is aspartate 116. Residues threonine 138, alanine 318, glutamine 320, histidine 335, tryptophan 338, serine 340, glutamate 343, aspartate 359, and glutamine 360 each contribute to the UDP-alpha-D-glucose site.

Belongs to the UDP-glycosyltransferase family. Expressed at higher levels in roots than in leaves.

It catalyses the reaction (20S)-ginsenoside F2 + UDP-alpha-D-glucose = (20S)-ginsenoside Rd + UDP + H(+). The catalysed reaction is (20S)-ginsenoside Rh2 + UDP-alpha-D-glucose = (20S)-ginsenoside Rg3 + UDP + H(+). It participates in secondary metabolite biosynthesis; terpenoid biosynthesis. Its function is as follows. Component of the dammarane-type triterpene saponins (e.g. PPD-type ginsenosides or panaxosides) biosynthetic pathway. Glycosyltransferase that catalyzes the conversion of ginsenoside Rh2 to ginsenoside Rg3. Triggers the biosynthesis of ginsenoside Rd from ginsenoside F2. The protein is UDP-glucosyltransferase 29 of Panax ginseng (Korean ginseng).